We begin with the raw amino-acid sequence, 316 residues long: Erythritol catabolism regulatory protein EryD (316 aa).

The segment at residues 23-42 is a DNA-binding region (H-T-H motif); sequence QSAVAKRLGLPSVKAHRLIA.

This sequence belongs to the SorC transcriptional regulatory family.

With respect to regulation, erythritol may act as an inducer, probably by binding to EryD and inhibiting its repressor activity. Functionally, represses the expression of the eryABCD operon, which is involved in erythritol catabolism. This is Erythritol catabolism regulatory protein EryD from Brucella abortus (strain 2308).